The following is a 155-amino-acid chain: SsrA-binding protein (155 aa).

Residues 135-147 are compositionally biased toward basic and acidic residues; sequence TIKRRDQERDIKK. The segment at 135 to 155 is disordered; that stretch reads TIKRRDQERDIKKQMKHYNAR.

This sequence belongs to the SmpB family.

It is found in the cytoplasm. Required for rescue of stalled ribosomes mediated by trans-translation. Binds to transfer-messenger RNA (tmRNA), required for stable association of tmRNA with ribosomes. tmRNA and SmpB together mimic tRNA shape, replacing the anticodon stem-loop with SmpB. tmRNA is encoded by the ssrA gene; the 2 termini fold to resemble tRNA(Ala) and it encodes a 'tag peptide', a short internal open reading frame. During trans-translation Ala-aminoacylated tmRNA acts like a tRNA, entering the A-site of stalled ribosomes, displacing the stalled mRNA. The ribosome then switches to translate the ORF on the tmRNA; the nascent peptide is terminated with the 'tag peptide' encoded by the tmRNA and targeted for degradation. The ribosome is freed to recommence translation, which seems to be the essential function of trans-translation. This Streptococcus pyogenes serotype M3 (strain SSI-1) protein is SsrA-binding protein.